A 50-amino-acid chain; its full sequence is U3-ctenitoxin-Asp1a (50 aa).

Expressed by the venom gland.

The protein resides in the secreted. Functionally, possible neurotoxin. The chain is U3-ctenitoxin-Asp1a from Ancylometes sp. (South American fishing spider).